The following is an 819-amino-acid chain: MKNLANIKLYWNENDFLIADMLLILKLSPRSSSDCLLDLRDRKWELVCCKELNIGNERNPLNVPLFELPVNSLELQNSVSNDMFKHVYSQNVELNHKTQVDFTEQLIPKKSLNKLNGTLRETMSRMPSFESISLSETSNALDDSCFNDDWITIESEFSPPIDRGMTLEAMDSQNDTLFTSKQLNNGPNFPVEKATFFLESNMGLSQRAAATSTTPVCNISSVTSAINSVGEISNASHSSSTSELPCTYGNTSSIFQVKNEMSNIKSAISEGYIAHDQQSKKVSVQNIKKEFLIPFEFSLEGGFLNYNKTFSNLYKVLSETEKTRDSKVWFTFRLVLKTKPLYASESEFYETKLNFFTFPLECAINFHIDCSCFDDWRLFSLKESSSVAVPIPKIKKESGRSMFQSLLFQFNHCIPFRLSWINYKQSQLNIILTETTIRPRICAAYQKLEYNILVLLNEKPSSGSQLILSASPTCTIENIYIENTRLHFSKSQTPEQTVISFIDVQCVKVTEATKTLELSVILSERLVYETALKLPVIKYVKGDNRFCFKQLLEYYDIYLKFKLLADWRLLTNPVLQIQEISDYCHFKLLKKVNRNLQIKTNYPTQEFHLLRPTIKILQISKHEYFLHFSSSYIFNDARERDVYGVKLSKNMWISWAYVDNCEANFFCKDGTYFFRTTSRKQILLLEIGILIKPERYNLFKYRVYLPQFLPPTDSRTLVEFQTIVYTNSTLLFDGSFYFSQNGGFDFEPRQNYTYFDFKSEFIILQNSYSIYGPAKNIIKLLLELIEVILNVNVSTTAMCLLTLLIGIYLILQVVFIYTN.

The chain crosses the membrane as a helical span at residues 797-817 (AMCLLTLLIGIYLILQVVFIY).

The protein resides in the membrane. Functionally, has a role in meiosis. In Schizosaccharomyces pombe (strain 972 / ATCC 24843) (Fission yeast), this protein is Meiotically up-regulated gene 45 protein (mug45).